The sequence spans 508 residues: Photosystem II CP47 reaction center protein (508 aa).

The next 6 helical transmembrane spans lie at 21–36 (SVHI…WAGS), 101–115 (IVFS…IWHW), 140–156 (GIHL…FGAF), 203–218 (IAAG…FHLS), 237–252 (VLSS…AFVV), and 457–472 (SFAL…HGAR).

It belongs to the PsbB/PsbC family. PsbB subfamily. PSII is composed of 1 copy each of membrane proteins PsbA, PsbB, PsbC, PsbD, PsbE, PsbF, PsbH, PsbI, PsbJ, PsbK, PsbL, PsbM, PsbT, PsbX, PsbY, PsbZ, Psb30/Ycf12, at least 3 peripheral proteins of the oxygen-evolving complex and a large number of cofactors. It forms dimeric complexes. Binds multiple chlorophylls. PSII binds additional chlorophylls, carotenoids and specific lipids. is required as a cofactor.

The protein localises to the plastid. It is found in the chloroplast thylakoid membrane. Functionally, one of the components of the core complex of photosystem II (PSII). It binds chlorophyll and helps catalyze the primary light-induced photochemical processes of PSII. PSII is a light-driven water:plastoquinone oxidoreductase, using light energy to abstract electrons from H(2)O, generating O(2) and a proton gradient subsequently used for ATP formation. The chain is Photosystem II CP47 reaction center protein from Arabis hirsuta (Hairy rock-cress).